A 155-amino-acid chain; its full sequence is SsrA-binding protein (155 aa).

It belongs to the SmpB family.

Its subcellular location is the cytoplasm. In terms of biological role, required for rescue of stalled ribosomes mediated by trans-translation. Binds to transfer-messenger RNA (tmRNA), required for stable association of tmRNA with ribosomes. tmRNA and SmpB together mimic tRNA shape, replacing the anticodon stem-loop with SmpB. tmRNA is encoded by the ssrA gene; the 2 termini fold to resemble tRNA(Ala) and it encodes a 'tag peptide', a short internal open reading frame. During trans-translation Ala-aminoacylated tmRNA acts like a tRNA, entering the A-site of stalled ribosomes, displacing the stalled mRNA. The ribosome then switches to translate the ORF on the tmRNA; the nascent peptide is terminated with the 'tag peptide' encoded by the tmRNA and targeted for degradation. The ribosome is freed to recommence translation, which seems to be the essential function of trans-translation. The chain is SsrA-binding protein from Streptococcus pneumoniae (strain 70585).